The sequence spans 231 residues: L-ribulose-5-phosphate 4-epimerase SgbE (231 aa).

Substrate contacts are provided by residues 27-28 (GN), 44-45 (SG), and 74-75 (SS). Zn(2+)-binding residues include Asp-76, His-95, and His-97. Asp-120 acts as the Proton donor/acceptor in catalysis. Residue His-171 participates in Zn(2+) binding. Tyr-229 functions as the Proton donor/acceptor in the catalytic mechanism.

It belongs to the aldolase class II family. AraD/FucA subfamily. Zn(2+) serves as cofactor.

The enzyme catalyses L-ribulose 5-phosphate = D-xylulose 5-phosphate. Functionally, catalyzes the interconversion of L-ribulose 5-phosphate (LRu5P) and D-xylulose 5-phosphate (D-Xu5P) via a retroaldol/aldol mechanism (carbon-carbon bond cleavage analogous to a class II aldolase reaction). May be involved in the utilization of 2,3-diketo-L-gulonate. In Escherichia coli (strain K12), this protein is L-ribulose-5-phosphate 4-epimerase SgbE.